Here is a 411-residue protein sequence, read N- to C-terminus: 1-deoxy-D-xylulose 5-phosphate reductoisomerase (411 aa).

Positions 23, 24, 25, 26, 49, 50, 51, and 137 each coordinate NADPH. Lys138 contacts 1-deoxy-D-xylulose 5-phosphate. Glu139 serves as a coordination point for NADPH. Asp163 lines the Mn(2+) pocket. 1-deoxy-D-xylulose 5-phosphate is bound by residues Ser164, Glu165, Ser199, and His222. Mn(2+) is bound at residue Glu165. Gly228 is a binding site for NADPH. Positions 235, 240, 241, and 244 each coordinate 1-deoxy-D-xylulose 5-phosphate. Glu244 is a binding site for Mn(2+).

It belongs to the DXR family. The cofactor is Mg(2+). Mn(2+) serves as cofactor.

It carries out the reaction 2-C-methyl-D-erythritol 4-phosphate + NADP(+) = 1-deoxy-D-xylulose 5-phosphate + NADPH + H(+). Its pathway is isoprenoid biosynthesis; isopentenyl diphosphate biosynthesis via DXP pathway; isopentenyl diphosphate from 1-deoxy-D-xylulose 5-phosphate: step 1/6. Its function is as follows. Catalyzes the NADPH-dependent rearrangement and reduction of 1-deoxy-D-xylulose-5-phosphate (DXP) to 2-C-methyl-D-erythritol 4-phosphate (MEP). In Mannheimia succiniciproducens (strain KCTC 0769BP / MBEL55E), this protein is 1-deoxy-D-xylulose 5-phosphate reductoisomerase.